Reading from the N-terminus, the 699-residue chain is Auxin response factor 10 (699 aa).

3 disordered regions span residues 108-136 (AAEA…DANN), 505-533 (TDLT…DDTK), and 551-595 (KNGN…SWSL). Positions 110 to 119 (EARREEENSR) are enriched in basic and acidic residues. Residues 125–135 (FAKTLTQSDAN) are compositionally biased toward polar residues. The TF-B3 DNA-binding region spans 125–227 (FAKTLTQSDA…NIHVGLRRAK (103 aa)). The span at 570–593 (PNTSEGSDSGVTQGSPTKNTTPSW) shows a compositional bias: polar residues. The PB1 domain maps to 613–693 (PGQCKVFVES…RKLRILTDAG (81 aa)).

This sequence belongs to the ARF family. In terms of assembly, homodimers and heterodimers.

Its subcellular location is the nucleus. Auxin response factors (ARFs) are transcriptional factors that bind specifically to the DNA sequence 5'-TGTCTC-3' found in the auxin-responsive promoter elements (AuxREs). The polypeptide is Auxin response factor 10 (ARF10) (Oryza sativa subsp. indica (Rice)).